Here is a 125-residue protein sequence, read N- to C-terminus: Large ribosomal subunit protein bL12 (125 aa).

Belongs to the bacterial ribosomal protein bL12 family. Homodimer. Part of the ribosomal stalk of the 50S ribosomal subunit. Forms a multimeric L10(L12)X complex, where L10 forms an elongated spine to which 2 to 4 L12 dimers bind in a sequential fashion. Binds GTP-bound translation factors.

Functionally, forms part of the ribosomal stalk which helps the ribosome interact with GTP-bound translation factors. Is thus essential for accurate translation. This chain is Large ribosomal subunit protein bL12, found in Porphyromonas gingivalis (strain ATCC 33277 / DSM 20709 / CIP 103683 / JCM 12257 / NCTC 11834 / 2561).